Here is a 485-residue protein sequence, read N- to C-terminus: 2-succinylbenzoate--CoA ligase (485 aa).

This sequence belongs to the ATP-dependent AMP-binding enzyme family. MenE subfamily.

It catalyses the reaction 2-succinylbenzoate + ATP + CoA = 2-succinylbenzoyl-CoA + AMP + diphosphate. It participates in quinol/quinone metabolism; 1,4-dihydroxy-2-naphthoate biosynthesis; 1,4-dihydroxy-2-naphthoate from chorismate: step 5/7. The protein operates within quinol/quinone metabolism; menaquinone biosynthesis. Functionally, converts 2-succinylbenzoate (OSB) to 2-succinylbenzoyl-CoA (OSB-CoA). This is 2-succinylbenzoate--CoA ligase from Enterococcus faecalis (strain ATCC 700802 / V583).